We begin with the raw amino-acid sequence, 168 residues long: 3-isopropylmalate dehydratase small subunit (168 aa).

This sequence belongs to the LeuD family. LeuD type 2 subfamily. As to quaternary structure, heterodimer of LeuC and LeuD.

It catalyses the reaction (2R,3S)-3-isopropylmalate = (2S)-2-isopropylmalate. The protein operates within amino-acid biosynthesis; L-leucine biosynthesis; L-leucine from 3-methyl-2-oxobutanoate: step 2/4. Catalyzes the isomerization between 2-isopropylmalate and 3-isopropylmalate, via the formation of 2-isopropylmaleate. The polypeptide is 3-isopropylmalate dehydratase small subunit (leuD) (Sulfurisphaera tokodaii (strain DSM 16993 / JCM 10545 / NBRC 100140 / 7) (Sulfolobus tokodaii)).